Here is a 200-residue protein sequence, read N- to C-terminus: Recombination protein RecR (200 aa).

The C4-type zinc-finger motif lies at 58–75 (CPCCFCLKNFPESQCEFC). The region spanning 82–177 (STLCIVASPK…SISRLALGLP (96 aa)) is the Toprim domain.

The protein belongs to the RecR family.

Functionally, may play a role in DNA repair. It seems to be involved in an RecBC-independent recombinational process of DNA repair. It may act with RecF and RecO. The sequence is that of Recombination protein RecR from Chlamydia felis (strain Fe/C-56) (Chlamydophila felis).